The chain runs to 373 residues: Leucine aminopeptidase 1 (373 aa).

Positions 1-18 (MKLLSVLALSATASSVLG) are cleaved as a signal peptide. Positions 19 to 75 (ASIPVDTRAEKFLIELAPGETRWVTEEEKWALKESGQDFFDITDEEVGFTAAVAQPA) are excised as a propeptide. Residues H176 and D195 each coordinate Zn(2+). A glycan (N-linked (GlcNAc...) asparagine) is linked at N196. Positions 234 and 261 each coordinate Zn(2+). N-linked (GlcNAc...) asparagine glycosylation occurs at N288. Cysteines 310 and 314 form a disulfide. Zn(2+) is bound at residue H343. The N-linked (GlcNAc...) asparagine glycan is linked to N348.

The protein belongs to the peptidase M28 family. M28E subfamily. Monomer. Zn(2+) serves as cofactor.

Its subcellular location is the secreted. Extracellular aminopeptidase that allows assimilation of proteinaceous substrates. In Arthroderma gypseum (strain ATCC MYA-4604 / CBS 118893) (Microsporum gypseum), this protein is Leucine aminopeptidase 1 (LAP1).